A 97-amino-acid chain; its full sequence is Small ribosomal subunit protein uS19 (97 aa).

The disordered stretch occupies residues 74–97 (FSPTRRFGGHPDKKAVKGKIEKQG). Basic and acidic residues predominate over residues 82 to 97 (GHPDKKAVKGKIEKQG).

This sequence belongs to the universal ribosomal protein uS19 family.

Functionally, protein S19 forms a complex with S13 that binds strongly to the 16S ribosomal RNA. The chain is Small ribosomal subunit protein uS19 from Petrotoga mobilis (strain DSM 10674 / SJ95).